The chain runs to 685 residues: Probable inactive leucine-rich repeat receptor-like protein kinase At1g66830 (685 aa).

Positions 1–21 are cleaved as a signal peptide; the sequence is MSQLFLILCFILTHFFAIATS. The Extracellular portion of the chain corresponds to 22 to 305; that stretch reads LNDQGLALLS…RRANHHSRLC (284 aa). Asn38 and Asn48 each carry an N-linked (GlcNAc...) asparagine glycan. LRR repeat units follow at residues 65 to 89, 90 to 113, 115 to 136, 137 to 161, 162 to 185, 186 to 210, 212 to 234, and 235 to 260; these read DMRV…IGSL, LSLR…LFGL, GLQS…EIGS, LKSL…LIPC, KKLK…LGSN, LVHL…VGSL, NLKG…SLGN, and LPEL…VLLN. A glycan (N-linked (GlcNAc...) asparagine) is linked at Asn151. An N-linked (GlcNAc...) asparagine glycan is attached at Asn193. Asn247 is a glycosylation site (N-linked (GlcNAc...) asparagine). The chain crosses the membrane as a helical span at residues 306–326; it reads IILTATGGTVAGIIFLASLFI. The Cytoplasmic segment spans residues 327-685; that stretch reads YYLRKASARA…ESFEKLVTSI (359 aa). The Protein kinase domain maps to 397 to 682; the sequence is KASAFLLGKS…SVLESFEKLV (286 aa). A phosphoserine mark is found at Ser399, Ser480, and Ser590.

Belongs to the protein kinase superfamily. Ser/Thr protein kinase family.

The protein localises to the cell membrane. The sequence is that of Probable inactive leucine-rich repeat receptor-like protein kinase At1g66830 from Arabidopsis thaliana (Mouse-ear cress).